The sequence spans 479 residues: Glycogen synthase (479 aa).

K15 is a binding site for ADP-alpha-D-glucose.

This sequence belongs to the glycosyltransferase 1 family. Bacterial/plant glycogen synthase subfamily.

The enzyme catalyses [(1-&gt;4)-alpha-D-glucosyl](n) + ADP-alpha-D-glucose = [(1-&gt;4)-alpha-D-glucosyl](n+1) + ADP + H(+). Its pathway is glycan biosynthesis; glycogen biosynthesis. Synthesizes alpha-1,4-glucan chains using ADP-glucose. This chain is Glycogen synthase, found in Clostridium novyi (strain NT).